A 949-amino-acid polypeptide reads, in one-letter code: Glycine dehydrogenase (decarboxylating) (949 aa).

Lys699 is subject to N6-(pyridoxal phosphate)lysine.

It belongs to the GcvP family. In terms of assembly, the glycine cleavage system is composed of four proteins: P, T, L and H. The cofactor is pyridoxal 5'-phosphate.

The enzyme catalyses N(6)-[(R)-lipoyl]-L-lysyl-[glycine-cleavage complex H protein] + glycine + H(+) = N(6)-[(R)-S(8)-aminomethyldihydrolipoyl]-L-lysyl-[glycine-cleavage complex H protein] + CO2. The glycine cleavage system catalyzes the degradation of glycine. The P protein binds the alpha-amino group of glycine through its pyridoxal phosphate cofactor; CO(2) is released and the remaining methylamine moiety is then transferred to the lipoamide cofactor of the H protein. This Roseobacter denitrificans (strain ATCC 33942 / OCh 114) (Erythrobacter sp. (strain OCh 114)) protein is Glycine dehydrogenase (decarboxylating).